The sequence spans 313 residues: B3 domain-containing protein At2g31720 (313 aa).

Residues 80–110 (KNQDPEQNPNRVASSPSSCHLESKRPQKVVS) are disordered. Polar residues predominate over residues 84-99 (PEQNPNRVASSPSSCH). The segment at residues 169–267 (WKQILDMDFL…MLFFAFVLSD (99 aa)) is a DNA-binding region (TF-B3).

It is found in the nucleus. The polypeptide is B3 domain-containing protein At2g31720 (ARF70) (Arabidopsis thaliana (Mouse-ear cress)).